Consider the following 507-residue polypeptide: Ribose import ATP-binding protein RbsA (507 aa).

ABC transporter domains lie at 7–242 (LEMR…VGRP) and 253–497 (IPLG…TGVT). 39-46 (GENGAGKS) is an ATP binding site.

The protein belongs to the ABC transporter superfamily. Ribose importer (TC 3.A.1.2.1) family. In terms of assembly, the complex is composed of an ATP-binding protein (RbsA), two transmembrane proteins (RbsC) and a solute-binding protein (RbsB).

The protein localises to the cell inner membrane. It catalyses the reaction D-ribose(out) + ATP + H2O = D-ribose(in) + ADP + phosphate + H(+). Functionally, part of the ABC transporter complex RbsABC involved in ribose import. Responsible for energy coupling to the transport system. The chain is Ribose import ATP-binding protein RbsA from Yersinia pestis bv. Antiqua (strain Antiqua).